The primary structure comprises 158 residues: Transcription antitermination protein NusB (158 aa).

Belongs to the NusB family.

Its function is as follows. Involved in transcription antitermination. Required for transcription of ribosomal RNA (rRNA) genes. Binds specifically to the boxA antiterminator sequence of the ribosomal RNA (rrn) operons. This is Transcription antitermination protein NusB from Bartonella henselae (strain ATCC 49882 / DSM 28221 / CCUG 30454 / Houston 1) (Rochalimaea henselae).